Here is a 113-residue protein sequence, read N- to C-terminus: ATP-dependent Clp protease adapter protein ClpS (113 aa).

The protein belongs to the ClpS family. In terms of assembly, binds to the N-terminal domain of the chaperone ClpA.

In terms of biological role, involved in the modulation of the specificity of the ClpAP-mediated ATP-dependent protein degradation. In Leptospira biflexa serovar Patoc (strain Patoc 1 / Ames), this protein is ATP-dependent Clp protease adapter protein ClpS.